A 126-amino-acid polypeptide reads, in one-letter code: MAVRILGVDLPQNKRGEIALTYIYGIGCGLSSKILTEAGIDRDTRIKDWTDVQVAAVREIISRNFKVEGDLRSEIQLNIKRLMDIGCYRGIRHRIGLPLRGQSTKNNARTRKGKRKTVANKKRVTK.

The tract at residues 99 to 126 (LRGQSTKNNARTRKGKRKTVANKKRVTK) is disordered. The segment covering 108–126 (ARTRKGKRKTVANKKRVTK) has biased composition (basic residues).

This sequence belongs to the universal ribosomal protein uS13 family. As to quaternary structure, part of the 30S ribosomal subunit. Forms a loose heterodimer with protein S19. Forms two bridges to the 50S subunit in the 70S ribosome.

Functionally, located at the top of the head of the 30S subunit, it contacts several helices of the 16S rRNA. In the 70S ribosome it contacts the 23S rRNA (bridge B1a) and protein L5 of the 50S subunit (bridge B1b), connecting the 2 subunits; these bridges are implicated in subunit movement. Contacts the tRNAs in the A and P-sites. This chain is Small ribosomal subunit protein uS13, found in Azobacteroides pseudotrichonymphae genomovar. CFP2.